A 301-amino-acid chain; its full sequence is Ribosomal RNA small subunit methyltransferase A (301 aa).

Residues asparagine 23, isoleucine 25, glycine 50, glutamate 72, aspartate 97, and asparagine 149 each coordinate S-adenosyl-L-methionine.

Belongs to the class I-like SAM-binding methyltransferase superfamily. rRNA adenine N(6)-methyltransferase family. RsmA subfamily.

Its subcellular location is the cytoplasm. It catalyses the reaction adenosine(1518)/adenosine(1519) in 16S rRNA + 4 S-adenosyl-L-methionine = N(6)-dimethyladenosine(1518)/N(6)-dimethyladenosine(1519) in 16S rRNA + 4 S-adenosyl-L-homocysteine + 4 H(+). Its function is as follows. Specifically dimethylates two adjacent adenosines (A1518 and A1519) in the loop of a conserved hairpin near the 3'-end of 16S rRNA in the 30S particle. May play a critical role in biogenesis of 30S subunits. This Rickettsia conorii (strain ATCC VR-613 / Malish 7) protein is Ribosomal RNA small subunit methyltransferase A.